Here is a 565-residue protein sequence, read N- to C-terminus: Phosphomethylpyrimidine synthase (565 aa).

Substrate-binding positions include asparagine 203, methionine 232, tyrosine 261, histidine 297, 317–319, 358–361, and glutamate 397; these read SRG and DGLR. Histidine 401 contacts Zn(2+). Tyrosine 424 provides a ligand contact to substrate. Histidine 465 is a Zn(2+) binding site. 3 residues coordinate [4Fe-4S] cluster: cysteine 541, cysteine 544, and cysteine 549.

The protein belongs to the ThiC family. [4Fe-4S] cluster serves as cofactor.

It carries out the reaction 5-amino-1-(5-phospho-beta-D-ribosyl)imidazole + S-adenosyl-L-methionine = 4-amino-2-methyl-5-(phosphooxymethyl)pyrimidine + CO + 5'-deoxyadenosine + formate + L-methionine + 3 H(+). The protein operates within cofactor biosynthesis; thiamine diphosphate biosynthesis. Catalyzes the synthesis of the hydroxymethylpyrimidine phosphate (HMP-P) moiety of thiamine from aminoimidazole ribotide (AIR) in a radical S-adenosyl-L-methionine (SAM)-dependent reaction. The chain is Phosphomethylpyrimidine synthase from Bacteroides thetaiotaomicron (strain ATCC 29148 / DSM 2079 / JCM 5827 / CCUG 10774 / NCTC 10582 / VPI-5482 / E50).